A 403-amino-acid polypeptide reads, in one-letter code: Argininosuccinate synthase (403 aa).

Residues 10–18 (AYSGGVDTS) and alanine 38 each bind ATP. An L-citrulline-binding site is contributed by tyrosine 89. Glycine 119 is an ATP binding site. L-aspartate contacts are provided by threonine 121, asparagine 125, and aspartate 126. Residue asparagine 125 participates in L-citrulline binding. L-citrulline is bound by residues arginine 129, serine 177, serine 186, glutamate 262, and tyrosine 274.

This sequence belongs to the argininosuccinate synthase family. Type 1 subfamily. As to quaternary structure, homotetramer.

It is found in the cytoplasm. The catalysed reaction is L-citrulline + L-aspartate + ATP = 2-(N(omega)-L-arginino)succinate + AMP + diphosphate + H(+). It functions in the pathway amino-acid biosynthesis; L-arginine biosynthesis; L-arginine from L-ornithine and carbamoyl phosphate: step 2/3. This chain is Argininosuccinate synthase, found in Parasynechococcus marenigrum (strain WH8102).